A 403-amino-acid chain; its full sequence is MSPFIFAVTLTFAILALGILRRRYFHPLSRFPGPFLGSVTSLYQTYWHVHPNKTLHDTELHRKYGPIVRYSPNGLIVNDPALLPVIYNRRANKTDFYAPVFDTHSTFTRKDYREHVASRKAISHAVGFLAFFRTEYSYGLVLLMIIFKQYSVTNTRLFEPQVDGILSELAGSSVTPSQLARVIFHISRNFKVQEKLYEELVAAEQDGRIPPLSAIISDEQAHRLPFLSACIREAQRYAPTMSQLPRYAPEGTGLELHEQYVPPGTSVSTSPWIIGRNKDLYGEDANSFRPERWLEASPEEERRWDHFSFHFGYGARKCLANNFGLMQLYKVAAEVCAYPIRCLLRYRAHHECRYFVVLKLKLKGRTRIQSVEGRLRVPGFALIAEQDPGHKHNGYINMDLFRA.

The signal sequence occupies residues 1 to 18 (MSPFIFAVTLTFAILALG). N-linked (GlcNAc...) asparagine glycans are attached at residues Asn-52 and Asn-92. Cys-318 is a heme binding site.

It belongs to the cytochrome P450 family. The cofactor is heme.

It functions in the pathway mycotoxin biosynthesis. Its function is as follows. Cytochrome P450 monooxygenase; part of the gene cluster that mediates the biosynthesis of the secondary metabolite ustiloxin B, an antimitotic tetrapeptide. First, ustA is processed by the subtilisin-like endoprotease Kex2 that is outside the ustiloxin B gene cluster, at the C-terminal side of Arg-Lys, after transfer to Golgi apparatus through the endoplasmic reticulum (ER). Cleavage by KEX2 generates 16 peptides YAIG-I to YAIG-XVI. To process the precursor peptide further, at least two peptidases are necessary to cleave the N-terminal and C-terminal sides of the Tyr-Ala-Ile-Gly core peptide which serves as backbone for the synthesis of ustiloxin B, through cyclization and modification of the tyrosine with a non-protein coding amino acid, norvaline. One of the two peptidases must be the serine peptidase ustP; and the other pepdidase is probably ustH. Macrocyclization of the core peptide derived from ustA requires the tyrosinase ustQ, as well as the homologous oxidases ustYa and ustYb, and leads to the production of the first cyclization product N-desmethylustiloxin F. For the formation of N-desmethylustiloxin F, three oxidation steps are required, hydroxylation at the benzylic position, hydroxylation at either the aromatic ring of Tyr or beta-position of Ile, and oxidative cyclization. UstQ may catalyze the oxidation of a phenol moiety, whereas the ustYa and ustYb are most likely responsible for the remaining two-step oxidations. N-desmethylustiloxin F is then methylated by ustM to yield ustiloxin F which in turn substrate of the cytochrome P450 monooxygenase ustC which catalyzes the formation of S-deoxyustiloxin H. The flavoprotein monooxygenases ustF1 and ustF2 then participate in the modification of the side chain of S-deoxyustiloxin H, leading to the synthesis of an oxime intermediate, via ustiloxin H. Finally, carboxylative dehydration performed by the cysteine desulfurase-like protein ustD yields ustiloxin B. This is Cytochrome P450 monooxygenase ustC from Aspergillus flavus (strain ATCC 200026 / FGSC A1120 / IAM 13836 / NRRL 3357 / JCM 12722 / SRRC 167).